Consider the following 680-residue polypeptide: DNA ligase (680 aa).

Residues 44 to 48, 94 to 95, and Glu124 contribute to the NAD(+) site; these read DYIYD and SL. Catalysis depends on Lys126, which acts as the N6-AMP-lysine intermediate. Residues Arg147, Glu181, Lys297, and Lys321 each coordinate NAD(+). 4 residues coordinate Zn(2+): Cys415, Cys418, Cys433, and Cys438. In terms of domain architecture, BRCT spans 598–680; the sequence is DENSFFYGKK…VDEQVKEDGK (83 aa).

The protein belongs to the NAD-dependent DNA ligase family. LigA subfamily. Mg(2+) is required as a cofactor. Mn(2+) serves as cofactor.

It catalyses the reaction NAD(+) + (deoxyribonucleotide)n-3'-hydroxyl + 5'-phospho-(deoxyribonucleotide)m = (deoxyribonucleotide)n+m + AMP + beta-nicotinamide D-nucleotide.. DNA ligase that catalyzes the formation of phosphodiester linkages between 5'-phosphoryl and 3'-hydroxyl groups in double-stranded DNA using NAD as a coenzyme and as the energy source for the reaction. It is essential for DNA replication and repair of damaged DNA. In Leuconostoc mesenteroides subsp. mesenteroides (strain ATCC 8293 / DSM 20343 / BCRC 11652 / CCM 1803 / JCM 6124 / NCDO 523 / NBRC 100496 / NCIMB 8023 / NCTC 12954 / NRRL B-1118 / 37Y), this protein is DNA ligase.